Reading from the N-terminus, the 189-residue chain is Elongation factor P (189 aa).

This sequence belongs to the elongation factor P family.

The protein localises to the cytoplasm. It functions in the pathway protein biosynthesis; polypeptide chain elongation. Involved in peptide bond synthesis. Stimulates efficient translation and peptide-bond synthesis on native or reconstituted 70S ribosomes in vitro. Probably functions indirectly by altering the affinity of the ribosome for aminoacyl-tRNA, thus increasing their reactivity as acceptors for peptidyl transferase. The polypeptide is Elongation factor P (Sinorhizobium fredii (strain NBRC 101917 / NGR234)).